Here is a 132-residue protein sequence, read N- to C-terminus: Small ribosomal subunit protein uS8 (132 aa).

The protein belongs to the universal ribosomal protein uS8 family. As to quaternary structure, part of the 30S ribosomal subunit. Contacts proteins S5 and S12.

Its function is as follows. One of the primary rRNA binding proteins, it binds directly to 16S rRNA central domain where it helps coordinate assembly of the platform of the 30S subunit. The protein is Small ribosomal subunit protein uS8 of Nitrobacter winogradskyi (strain ATCC 25391 / DSM 10237 / CIP 104748 / NCIMB 11846 / Nb-255).